Reading from the N-terminus, the 171-residue chain is S-ribosylhomocysteine lyase (171 aa).

Residues His54, His58, and Cys128 each coordinate Fe cation.

Belongs to the LuxS family. In terms of assembly, homodimer. Requires Fe cation as cofactor.

It carries out the reaction S-(5-deoxy-D-ribos-5-yl)-L-homocysteine = (S)-4,5-dihydroxypentane-2,3-dione + L-homocysteine. In terms of biological role, involved in the synthesis of autoinducer 2 (AI-2) which is secreted by bacteria and is used to communicate both the cell density and the metabolic potential of the environment. The regulation of gene expression in response to changes in cell density is called quorum sensing. Catalyzes the transformation of S-ribosylhomocysteine (RHC) to homocysteine (HC) and 4,5-dihydroxy-2,3-pentadione (DPD). This Campylobacter concisus (strain 13826) protein is S-ribosylhomocysteine lyase.